Reading from the N-terminus, the 100-residue chain is Large ribosomal subunit protein eL31 (100 aa).

The protein belongs to the eukaryotic ribosomal protein eL31 family.

In Hyperthermus butylicus (strain DSM 5456 / JCM 9403 / PLM1-5), this protein is Large ribosomal subunit protein eL31.